The following is a 106-amino-acid chain: UPF0145 protein VC_A0951 (106 aa).

It belongs to the UPF0145 family.

The polypeptide is UPF0145 protein VC_A0951 (Vibrio cholerae serotype O1 (strain ATCC 39315 / El Tor Inaba N16961)).